Here is a 414-residue protein sequence, read N- to C-terminus: Diaminopimelate decarboxylase (414 aa).

Lys52 carries the post-translational modification N6-(pyridoxal phosphate)lysine. Residues Gly231 and 265 to 268 each bind pyridoxal 5'-phosphate; that span reads EPGR. Substrate is bound by residues Arg268, Arg304, and Tyr308. The Proton donor role is filled by Cys334. 2 residues coordinate substrate: Glu335 and Tyr362. Tyr362 contacts pyridoxal 5'-phosphate.

Belongs to the Orn/Lys/Arg decarboxylase class-II family. LysA subfamily. As to quaternary structure, homodimer. It depends on pyridoxal 5'-phosphate as a cofactor.

The catalysed reaction is meso-2,6-diaminopimelate + H(+) = L-lysine + CO2. Its pathway is amino-acid biosynthesis; L-lysine biosynthesis via DAP pathway; L-lysine from DL-2,6-diaminopimelate: step 1/1. Functionally, specifically catalyzes the decarboxylation of meso-diaminopimelate (meso-DAP) to L-lysine. The chain is Diaminopimelate decarboxylase from Neisseria meningitidis serogroup B (strain ATCC BAA-335 / MC58).